The sequence spans 555 residues: CD166 antigen homolog (555 aa).

The signal sequence occupies residues 1-22 (MQSVVCLIGAFIAAAVFRPGSC). Ig-like V-type domains follow at residues 23–127 (VGTV…EVKV) and 131–229 (PSAP…DQVS). At 23 to 499 (VGTVIGLYGE…NEDGTEQAKV (477 aa)) the chain is on the extracellular side. 3 disulfide bridges follow: Cys-38/Cys-110, Cys-154/Cys-217, and Cys-263/Cys-306. Residues Asn-92 and Asn-171 are each glycosylated (N-linked (GlcNAc...) asparagine). Ig-like C2-type domains lie at 239-323 (PTEK…VTVS), 319-397 (FVTV…RSLS), and 406-484 (PKIT…KEIS). N-linked (GlcNAc...) asparagine glycosylation is found at Asn-350, Asn-441, and Asn-465. A disulfide bridge links Cys-426 with Cys-470. Residues 500 to 520 (IVGIVVGLLVAAALVGLIYWI) traverse the membrane as a helical segment. Topologically, residues 521–555 (YIKKTRQGSWKTGEKEAGTSEESKKLEENNHKPDV) are cytoplasmic. The tract at residues 529–555 (SWKTGEKEAGTSEESKKLEENNHKPDV) is disordered. A compositionally biased stretch (basic and acidic residues) spans 532–555 (TGEKEAGTSEESKKLEENNHKPDV).

As to quaternary structure, homodimer. Interacts (via extracellular domain) with CD6 (via extracellular domain). Homodimerization and interaction with CD6 involve the same region and cannot occur simultaneously. The affinity for CD6 is much higher than the affinity for self-association. In terms of tissue distribution, present on all retinal ganglion cells (RGCS) and their axons (in embryo). Absent from mature axons along most of their length, but is present on new and growing axons derived from the RGCS at the retinal margin. Remains on adult RGCS only at cell-cell contact sites and is continuously found in the retinal axon terminal arbor layers of the adult tectum.

The protein resides in the cell membrane. It localises to the cell projection. The protein localises to the axon. Its subcellular location is the dendrite. In terms of biological role, cell adhesion molecule that mediates both heterotypic cell-cell contacts via its interaction with CD6, as well as homotypic cell-cell contacts. Promotes T-cell activation and proliferation via its interactions with CD6. Contributes to the formation and maturation of the immunological synapse via its interactions with CD6. Mediates homotypic interactions with cells that express ALCAM. Mediates attachment of dendritic cells onto endothelial cells via homotypic interaction. Inhibits endothelial cell migration and promotes endothelial tube formation via homotypic interactions. Required for normal organization of the lymph vessel network. Required for normal hematopoietic stem cell engraftment in the bone marrow. Plays a role in hematopoiesis; required for normal numbers of hematopoietic stem cells in bone marrow. Promotes in vitro osteoblast proliferation and differentiation. Promotes neurite extension, axon growth and axon guidance; axons grow preferentially on surfaces that contain ALCAM. Mediates outgrowth and pathfinding for retinal ganglion cell axons. The polypeptide is CD166 antigen homolog (alcam) (Carassius auratus (Goldfish)).